We begin with the raw amino-acid sequence, 314 residues long: Leucotoxin LukE (314 aa).

The N-terminal stretch at 1-28 is a signal peptide; the sequence is MFKKKMLAASLSVGLIAPLASPIQESRA.

This sequence belongs to the aerolysin family. Toxicity requires sequential binding and synergistic association of a class S and a class F component which form heterooligomeric complexes. LukE (class S) associates with LukD (class F). LukE can also associate with HlgB.

The protein resides in the secreted. Its function is as follows. Part of a bi-component leucotoxin that acts by forming pores in the membrane of the target cells. LukE-LukD is as effective as the Panton-Valentine leucocidin (PVL) for inducing dermonecrosis when injected in the rabbit skin, but not hemolytic and poorly leucotoxic on human blood cells compared to other leucotoxins expressed by S.aureus. In Staphylococcus aureus, this protein is Leucotoxin LukE (lukE).